A 152-amino-acid chain; its full sequence is Large ribosomal subunit protein uL15 (152 aa).

Positions 1–57 (MTSTLNTLKSNSGSRKKKLRKGRGIAAGQGASCGFGMRGQKSRSGRPTRPGFEGGQM) are disordered. A compositionally biased stretch (basic residues) spans 14–23 (SRKKKLRKGR). Positions 25-37 (IAAGQGASCGFGM) are enriched in gly residues.

It belongs to the universal ribosomal protein uL15 family. In terms of assembly, part of the 50S ribosomal subunit.

Functionally, binds to the 23S rRNA. The protein is Large ribosomal subunit protein uL15 of Prochlorococcus marinus (strain MIT 9312).